We begin with the raw amino-acid sequence, 480 residues long: Cobyric acid synthase (480 aa).

A GATase cobBQ-type domain is found at 249-436 (KLKVVVPVLT…LHGFLDSEAA (188 aa)). Cys-330 (nucleophile) is an active-site residue. The active site involves His-428.

This sequence belongs to the CobB/CobQ family. CobQ subfamily.

It participates in cofactor biosynthesis; adenosylcobalamin biosynthesis. Catalyzes amidations at positions B, D, E, and G on adenosylcobyrinic A,C-diamide. NH(2) groups are provided by glutamine, and one molecule of ATP is hydrogenolyzed for each amidation. The chain is Cobyric acid synthase from Vibrio vulnificus (strain YJ016).